A 32-amino-acid polypeptide reads, in one-letter code: U13-ctenitoxin-Pn1a (32 aa).

3 disulfides stabilise this stretch: Cys-3–Cys-17, Cys-10–Cys-21, and Cys-16–Cys-30.

As to expression, expressed by the venom gland.

The protein localises to the secreted. Functionally, acts as a neurotoxin. The protein is U13-ctenitoxin-Pn1a of Phoneutria nigriventer (Brazilian armed spider).